We begin with the raw amino-acid sequence, 110 residues long: Large ribosomal subunit protein uL22 (110 aa).

This sequence belongs to the universal ribosomal protein uL22 family. Part of the 50S ribosomal subunit.

This protein binds specifically to 23S rRNA; its binding is stimulated by other ribosomal proteins, e.g. L4, L17, and L20. It is important during the early stages of 50S assembly. It makes multiple contacts with different domains of the 23S rRNA in the assembled 50S subunit and ribosome. Functionally, the globular domain of the protein is located near the polypeptide exit tunnel on the outside of the subunit, while an extended beta-hairpin is found that lines the wall of the exit tunnel in the center of the 70S ribosome. The sequence is that of Large ribosomal subunit protein uL22 from Pasteurella multocida (strain Pm70).